Reading from the N-terminus, the 519-residue chain is 2-isopropylmalate synthase (519 aa).

The Pyruvate carboxyltransferase domain maps to 5 to 267 (VIIFDTTLRD…YTNIHHHEIY (263 aa)). Mn(2+) is bound by residues Asp14, His202, His204, and Asn238. The tract at residues 392-519 (ALESFHIHST…NHKNTQHIKK (128 aa)) is regulatory domain.

It belongs to the alpha-IPM synthase/homocitrate synthase family. LeuA type 1 subfamily. Homodimer. Mn(2+) serves as cofactor.

The protein resides in the cytoplasm. The enzyme catalyses 3-methyl-2-oxobutanoate + acetyl-CoA + H2O = (2S)-2-isopropylmalate + CoA + H(+). It functions in the pathway amino-acid biosynthesis; L-leucine biosynthesis; L-leucine from 3-methyl-2-oxobutanoate: step 1/4. Functionally, catalyzes the condensation of the acetyl group of acetyl-CoA with 3-methyl-2-oxobutanoate (2-ketoisovalerate) to form 3-carboxy-3-hydroxy-4-methylpentanoate (2-isopropylmalate). The protein is 2-isopropylmalate synthase of Blochmanniella floridana.